The sequence spans 430 residues: Na(+)/H(+) antiporter NhaA 2 (430 aa).

10 helical membrane-spanning segments follow: residues 11 to 31 (FVHG…IAFI), 60 to 80 (LSLE…LVGL), 97 to 117 (VALA…LYTA), 127 to 147 (GWGV…ALLG), 181 to 201 (LNLT…YAGW), 215 to 235 (VLLW…GVLL), 288 to 308 (HALH…TNAG), 309 to 329 (VPVA…GLLL), 356 to 376 (WGHM…SLFV), and 393 to 413 (GVLL…LLGI).

This sequence belongs to the NhaA Na(+)/H(+) (TC 2.A.33) antiporter family.

Its subcellular location is the cell membrane. The enzyme catalyses Na(+)(in) + 2 H(+)(out) = Na(+)(out) + 2 H(+)(in). Na(+)/H(+) antiporter that extrudes sodium in exchange for external protons. The protein is Na(+)/H(+) antiporter NhaA 2 of Deinococcus geothermalis (strain DSM 11300 / CIP 105573 / AG-3a).